Reading from the N-terminus, the 430-residue chain is CC-adding tRNA nucleotidyltransferase (430 aa).

33-36 (GCVR) is a binding site for CTP. Asp46 and Asp48 together coordinate Mg(2+). CTP-binding positions include 108-109 (RD), Asn113, 150-159 (DPLRIVRAYR), and Arg190.

It belongs to the tRNA nucleotidyltransferase/poly(A) polymerase family. It depends on Mg(2+) as a cofactor.

The catalysed reaction is a tRNA precursor + 2 CTP = a tRNA with a 3' CC end + 2 diphosphate. In terms of biological role, tRNA nucleotidyltransferase involved in the synthesis of the tRNA CCA terminus. Adds the two cytidine residues to tRNA. The chain is CC-adding tRNA nucleotidyltransferase from Geobacter sulfurreducens (strain ATCC 51573 / DSM 12127 / PCA).